Consider the following 316-residue polypeptide: Aspartate carbamoyltransferase catalytic subunit (316 aa).

The carbamoyl phosphate site is built by arginine 58 and threonine 59. Lysine 86 lines the L-aspartate pocket. Positions 108, 136, and 139 each coordinate carbamoyl phosphate. L-aspartate-binding residues include arginine 169 and arginine 223. Carbamoyl phosphate is bound by residues glycine 264 and proline 265.

It belongs to the aspartate/ornithine carbamoyltransferase superfamily. ATCase family. Heterododecamer (2C3:3R2) of six catalytic PyrB chains organized as two trimers (C3), and six regulatory PyrI chains organized as three dimers (R2).

The enzyme catalyses carbamoyl phosphate + L-aspartate = N-carbamoyl-L-aspartate + phosphate + H(+). It functions in the pathway pyrimidine metabolism; UMP biosynthesis via de novo pathway; (S)-dihydroorotate from bicarbonate: step 2/3. Catalyzes the condensation of carbamoyl phosphate and aspartate to form carbamoyl aspartate and inorganic phosphate, the committed step in the de novo pyrimidine nucleotide biosynthesis pathway. This chain is Aspartate carbamoyltransferase catalytic subunit, found in Dinoroseobacter shibae (strain DSM 16493 / NCIMB 14021 / DFL 12).